A 406-amino-acid polypeptide reads, in one-letter code: Uronyl 2-sulfotransferase (406 aa).

Residues 1-49 (MKKKQQHPGGGADPWPHGAPMGGAPPGLGSWKRRVPLLPFLRFSLRDYG) are Cytoplasmic-facing. A helical; Signal-anchor for type II membrane protein transmembrane segment spans residues 50–70 (FCMATLLVFCLGSLLYQLSGG). Residues 71–406 (PPRFLLDLRQ…EKWLEDIYKR (336 aa)) are Lumenal-facing. N-linked (GlcNAc...) asparagine glycosylation is found at asparagine 84, asparagine 140, and asparagine 155. Histidine 168 is an active-site residue. N-linked (GlcNAc...) asparagine glycosylation is found at asparagine 173 and asparagine 319. Residues 387-399 (EPIDDEEQDDEKW) show a composition bias toward acidic residues. Residues 387–406 (EPIDDEEQDDEKWLEDIYKR) are disordered.

Belongs to the sulfotransferase 3 family. Widely expressed.

The protein localises to the golgi apparatus membrane. In terms of biological role, sulfotransferase that catalyzes the transfer of sulfate to the position 2 of uronyl residues in glycosaminoglycan chains. Has mainly activity toward iduronyl residues in dermatan sulfate, and weaker activity toward glucuronyl residues of chondroitin sulfate. Has little to no activity toward desulfated N-resulfated heparin or N-sulfoheparosan. The sequence is that of Uronyl 2-sulfotransferase from Homo sapiens (Human).